Reading from the N-terminus, the 335-residue chain is E3 ubiquitin-protein ligase NLA (335 aa).

Residues 1–154 (MKFCKKYEEY…ESRQGQAFKT (154 aa)) enclose the SPX domain. The RING-type zinc-finger motif lies at 231-280 (CSICLDTVFDPISLTCGHIYCYMCACSAASVNVVDGLKTAEATEKCPLCR).

As to quaternary structure, interacts with UBC8. Interacts with PHT1-1 and PHT1-4. Forms homodimers (via RING domain). Interacts with UBC24/PHO2. Interacts with NPF2.13/NRT1.7. Interacts with NAC92/ORE1. In terms of tissue distribution, high expression in roots and stems, medium in seedlings, flowers, rosette and cauline leaves, and very low in siliques. Detected in cotyledons, hypocotyls, pedicel, receptacle, pistil, sepal, filament of stamen and at the two ends of developing siliques.

The protein resides in the nucleus speckle. Its subcellular location is the nucleus. It localises to the cell membrane. The catalysed reaction is S-ubiquitinyl-[E2 ubiquitin-conjugating enzyme]-L-cysteine + [acceptor protein]-L-lysine = [E2 ubiquitin-conjugating enzyme]-L-cysteine + N(6)-ubiquitinyl-[acceptor protein]-L-lysine.. It participates in protein modification; protein ubiquitination. E3 ubiquitin-protein ligase that mediates E2-dependent protein ubiquitination. Plays a role in salicylic acid-mediated negative feedback regulation of salicylic acid (SA) accumulation. May be involved in the overall regulation of SA, benzoic acid and phenylpropanoid biosynthesis. Involved in defense response. May act as negative regulator of resistance to the necrotrophic fungal pathogen Plectosphaerella cucumerina by modulating the accumulation of the phytoalexin camalexin and the salicylic acid- and jasmonate- dependent defense pathways. Controls the adaptability to nitrogen limitation by channeling the phenylpropanoid metabolic flux to the induced anthocyanin synthesis. Involved in the regulation of inorganic phosphate (Pi) homeostasis in a nitrate-dependent fashion. Directs the ubiquitination and subsequent degradation of the plasma membrane-localized inorganic phosphate transporters PHT1-1 and PHT1-4, to maintain phosphate homeostasis. The ubiquitination of PHTs triggers their clathrin-dependent endocytosis and trafficking to the vacuole through the endosomal pathway for degradation. Functions cooperatively with UBC24/PHO2 to regulate the abundance of PHT1-1, PHT1-2 and PHT1-3 in different subcellular compartments. Regulates Pi homeostasis by mediating, cooperatively with UBC24/PHO2, polyubiquitination of PHT1-4 and its targeting for degradation. Directs the polyubiquitination and subsequent degradation of the plasma membrane-localized nitrate transporter NPF2.13/NRT1.7, to help plants to adapt to nitrogen deficiency by regulating the source-to-sink remobilization of nitrate. Regulates leaf senescence during nitrogen deficiency by mediating, cooperatively with UBC24/PHO2, polyubiquitination of NAC92/ORE1 and its targeting for degradation. This is E3 ubiquitin-protein ligase NLA from Arabidopsis thaliana (Mouse-ear cress).